We begin with the raw amino-acid sequence, 440 residues long: tRNA-2-methylthio-N(6)-dimethylallyladenosine synthase (440 aa).

Residues 4-120 enclose the MTTase N-terminal domain; the sequence is NYVYIETFGC…LNDMVLAAER (117 aa). [4Fe-4S] cluster is bound by residues C13, C49, C83, C158, C162, and C165. Positions 144 to 374 constitute a Radical SAM core domain; sequence GTARISSFVT…QALQKRTTME (231 aa). The TRAM domain maps to 377-439; it reads DVLLGTRQTV…QNSLLGELLP (63 aa).

Belongs to the methylthiotransferase family. MiaB subfamily. As to quaternary structure, monomer. [4Fe-4S] cluster serves as cofactor.

It is found in the cytoplasm. It carries out the reaction N(6)-dimethylallyladenosine(37) in tRNA + (sulfur carrier)-SH + AH2 + 2 S-adenosyl-L-methionine = 2-methylsulfanyl-N(6)-dimethylallyladenosine(37) in tRNA + (sulfur carrier)-H + 5'-deoxyadenosine + L-methionine + A + S-adenosyl-L-homocysteine + 2 H(+). Its function is as follows. Catalyzes the methylthiolation of N6-(dimethylallyl)adenosine (i(6)A), leading to the formation of 2-methylthio-N6-(dimethylallyl)adenosine (ms(2)i(6)A) at position 37 in tRNAs that read codons beginning with uridine. The polypeptide is tRNA-2-methylthio-N(6)-dimethylallyladenosine synthase (Pelobacter propionicus (strain DSM 2379 / NBRC 103807 / OttBd1)).